We begin with the raw amino-acid sequence, 846 residues long: Aminopeptidase N (846 aa).

Substrate contacts are provided by residues glutamate 120 and glycine 252–asparagine 256. Histidine 288 lines the Zn(2+) pocket. Catalysis depends on glutamate 289, which acts as the Proton acceptor. Zn(2+) is bound by residues histidine 292 and glutamate 311.

This sequence belongs to the peptidase M1 family. Monomer. It depends on Zn(2+) as a cofactor.

The protein localises to the cytoplasm. It catalyses the reaction Release of an N-terminal amino acid, Xaa-|-Yaa- from a peptide, amide or arylamide. Xaa is preferably Ala, but may be most amino acids including Pro (slow action). When a terminal hydrophobic residue is followed by a prolyl residue, the two may be released as an intact Xaa-Pro dipeptide.. Functionally, aminopeptidase with broad substrate specificity to several peptides. It has more affinity for oligopeptides than for dipeptides. It plays an essential role in the metabolism, it may be involved in nitrogen supply or protein turnover. In Lactococcus lactis subsp. lactis (strain IL1403) (Streptococcus lactis), this protein is Aminopeptidase N (pepN).